The following is a 271-amino-acid chain: ATP synthase subunit a (271 aa).

Helical transmembrane passes span 38-58 (FWTLNIDSMFFSVVLGLLFLA), 100-120 (VIAPLALTVFVWVFLMNLMDL), 146-166 (DVNITLSMALGVFILIIFYSI), 211-231 (LFGNMYAGELIFILIAGLLPW), and 242-262 (AIFHILIITLQAFIFMVLTIV).

It belongs to the ATPase A chain family. As to quaternary structure, F-type ATPases have 2 components, CF(1) - the catalytic core - and CF(0) - the membrane proton channel. CF(1) has five subunits: alpha(3), beta(3), gamma(1), delta(1), epsilon(1). CF(0) has three main subunits: a(1), b(2) and c(9-12). The alpha and beta chains form an alternating ring which encloses part of the gamma chain. CF(1) is attached to CF(0) by a central stalk formed by the gamma and epsilon chains, while a peripheral stalk is formed by the delta and b chains.

The protein localises to the cell inner membrane. Its function is as follows. Key component of the proton channel; it plays a direct role in the translocation of protons across the membrane. This is ATP synthase subunit a from Klebsiella pneumoniae (strain 342).